The following is a 303-amino-acid chain: Peroxisomal trans-2-enoyl-CoA reductase (303 aa).

NADP(+) is bound at residue 23–47; it reads VTGGATGIGKAIVKELLELGSNVVI. An N6-succinyllysine modification is found at K32. Phosphoserine is present on S49. The Proton acceptor role is filled by Y179. A Phosphotyrosine modification is found at Y179. The Microbody targeting signal signature appears at 301–303; that stretch reads AKL.

The protein belongs to the short-chain dehydrogenases/reductases (SDR) family. As to quaternary structure, interacts with PEX5, probably required to target it into peroxisomes.

It localises to the peroxisome. The enzyme catalyses a (2E)-enoyl-CoA + NADPH + H(+) = a 2,3-saturated acyl-CoA + NADP(+). It catalyses the reaction (2E)-hexenoyl-CoA + NADPH + H(+) = hexanoyl-CoA + NADP(+). It carries out the reaction (2E)-octenoyl-CoA + NADPH + H(+) = octanoyl-CoA + NADP(+). The catalysed reaction is (2E)-decenoyl-CoA + NADPH + H(+) = decanoyl-CoA + NADP(+). The enzyme catalyses (2E)-dodecenoyl-CoA + NADPH + H(+) = dodecanoyl-CoA + NADP(+). It catalyses the reaction (2E)-tetradecenoyl-CoA + NADPH + H(+) = tetradecanoyl-CoA + NADP(+). It functions in the pathway lipid metabolism; fatty acid biosynthesis. Its function is as follows. Participates in chain elongation of fatty acids. Catalyzes the reduction of trans-2-enoyl-CoAs of varying chain lengths from 6:1 to 16:1, having maximum activity with 10:1 CoA. Has no 2,4-dienoyl-CoA reductase activity. The sequence is that of Peroxisomal trans-2-enoyl-CoA reductase (PECR) from Pongo abelii (Sumatran orangutan).